Here is an 899-residue protein sequence, read N- to C-terminus: Valine--tRNA ligase (899 aa).

The 'HIGH' region signature appears at 58-68 (PNVTGVLHIGH). Positions 544-548 (KMSKS) match the 'KMSKS' region motif. Lys547 is a binding site for ATP. The stretch at 836–898 (GTRLHNQRQK…NAELIALGLQ (63 aa)) forms a coiled coil.

Belongs to the class-I aminoacyl-tRNA synthetase family. ValS type 1 subfamily. As to quaternary structure, monomer.

Its subcellular location is the cytoplasm. The catalysed reaction is tRNA(Val) + L-valine + ATP = L-valyl-tRNA(Val) + AMP + diphosphate. In terms of biological role, catalyzes the attachment of valine to tRNA(Val). As ValRS can inadvertently accommodate and process structurally similar amino acids such as threonine, to avoid such errors, it has a 'posttransfer' editing activity that hydrolyzes mischarged Thr-tRNA(Val) in a tRNA-dependent manner. This is Valine--tRNA ligase from Helicobacter hepaticus (strain ATCC 51449 / 3B1).